Reading from the N-terminus, the 590-residue chain is Putative histone-lysine N-methyltransferase PRDM6 (590 aa).

Residues 25–87 are disordered; sequence QLFPHGGGGP…STPASSSTSA (63 aa). Over residues 29 to 42 the composition is skewed to gly residues; it reads HGGGGPLKGGGAAG. Low complexity predominate over residues 71 to 87; it reads ASLSSASSTPASSSTSA. The 120-residue stretch at 241-360 folds into the SET domain; the sequence is REVCLCTSTV…RGTELLVWYN (120 aa). Residues 468 to 490 form a C2H2-type 1; degenerate zinc finger; sequence WKCGQCFKTFTQRILLQMHVCTQ. 2 C2H2-type zinc fingers span residues 496 to 518 and 524 to 546; these read YQCGHCSQSFSQPSELRNHVVTH and FKCGYCGRAFAGATTLNNHIRTH. The segment at 552-574 adopts a C2H2-type 4; degenerate zinc-finger fold; the sequence is FKCERCERSFTQATQLSRHQRMP.

The protein belongs to the class V-like SAM-binding methyltransferase superfamily. Interacts with HDAC1, HDAC2, HDAC3, CBX1 and EP300.

The protein localises to the nucleus. It catalyses the reaction L-lysyl(20)-[histone H4] + S-adenosyl-L-methionine = N(6)-methyl-L-lysyl(20)-[histone H4] + S-adenosyl-L-homocysteine + H(+). Putative histone methyltransferase that acts as a transcriptional repressor of smooth muscle gene expression. Promotes the transition from differentiated to proliferative smooth muscle by suppressing differentiation and maintaining the proliferative potential of vascular smooth muscle cells. Also plays a role in endothelial cells by inhibiting endothelial cell proliferation, survival and differentiation. It is unclear whether it has histone methyltransferase activity in vivo. According to some authors, it does not act as a histone methyltransferase by itself and represses transcription by recruiting EHMT2/G9a. According to others, it possesses histone methyltransferase activity when associated with other proteins and specifically methylates 'Lys-20' of histone H4 in vitro. 'Lys-20' methylation represents a specific tag for epigenetic transcriptional repression. This Bos taurus (Bovine) protein is Putative histone-lysine N-methyltransferase PRDM6 (PRDM6).